A 218-amino-acid chain; its full sequence is dTTP/UTP pyrophosphatase (218 aa).

The segment covering 1–10 (MTASPSSAEG) has biased composition (polar residues). Residues 1-20 (MTASPSSAEGSSGLPDRPKL) form a disordered region. Aspartate 87 functions as the Proton acceptor in the catalytic mechanism.

Belongs to the Maf family. YhdE subfamily. Requires a divalent metal cation as cofactor.

The protein localises to the cytoplasm. The enzyme catalyses dTTP + H2O = dTMP + diphosphate + H(+). It catalyses the reaction UTP + H2O = UMP + diphosphate + H(+). Functionally, nucleoside triphosphate pyrophosphatase that hydrolyzes dTTP and UTP. May have a dual role in cell division arrest and in preventing the incorporation of modified nucleotides into cellular nucleic acids. This is dTTP/UTP pyrophosphatase from Gluconobacter oxydans (strain 621H) (Gluconobacter suboxydans).